The sequence spans 140 residues: Putative pre-16S rRNA nuclease (140 aa).

Belongs to the YqgF nuclease family.

The protein resides in the cytoplasm. Its function is as follows. Could be a nuclease involved in processing of the 5'-end of pre-16S rRNA. The protein is Putative pre-16S rRNA nuclease of Yersinia pseudotuberculosis serotype IB (strain PB1/+).